A 399-amino-acid chain; its full sequence is Bone morphogenetic protein 8B (399 aa).

The N-terminal stretch at 1–19 (MAARPGLLWLLGLALCVLG) is a signal peptide. The propeptide occupies 20-260 (GGHLSHPPHV…ANQSPVRAPR (241 aa)). Residues N155 and N340 are each glycosylated (N-linked (GlcNAc...) asparagine). Disulfide bonds link C298/C364, C327/C396, and C331/C398.

Belongs to the TGF-beta family. Homodimer; disulfide-linked. Expressed in testis. Expressed in decidual cells of the uterus and in trophoblast cells of the labyrinthine region of the placenta and in the inner root sheath of hair follicles of early postnatal skin. Expressed in the extraembryonic ectoderm in pregastrula and gastrula stage mouse embryos. Expressed in brown adipose tissue and brain.

The protein resides in the secreted. Functionally, induces cartilage and bone formation. May be the osteoinductive factor responsible for the phenomenon of epithelial osteogenesis. Plays a role in calcium regulation and bone homeostasis. Involved in the generation of primordial germ cells; this function involves Bmp4 in a synergistic manner though separate receptor complexes seem to be involved. Required for the initiation and maintenance of spermatogenesis. Signaling protein involved in regulation of thermogenesis and energy balance. Proposed to increase the peripheral response of brown adipose tissue (BAT) to adrenergic stimulation while acting centrally in the hypothalamus to increase sympathetic output to BAT. The chain is Bone morphogenetic protein 8B (Bmp8b) from Mus musculus (Mouse).